Consider the following 489-residue polypeptide: Valine--tRNA ligase (489 aa).

A 'KMSKS' region motif is present at residues 482 to 486 (KMSKS). An ATP-binding site is contributed by K485.

It belongs to the class-I aminoacyl-tRNA synthetase family.

The catalysed reaction is tRNA(Val) + L-valine + ATP = L-valyl-tRNA(Val) + AMP + diphosphate. This chain is Valine--tRNA ligase (VALS), found in Trichomonas vaginalis.